The primary structure comprises 390 residues: Formamidopyrimidine-DNA glycosylase (390 aa).

Pro2 acts as the Schiff-base intermediate with DNA in catalysis. The active-site Proton donor is Glu3. Lys60 acts as the Proton donor; for beta-elimination activity in catalysis. 4 residues coordinate DNA: Tyr107, Arg126, Lys167, and Asn186. The disordered stretch occupies residues 283–390; that stretch reads AEKAAKVRPA…AGKKPKGRKS (108 aa). The span at 301–316 shows a compositional bias: acidic residues; it reads DDGDGEEDEQETEKED. Over residues 321 to 337 the composition is skewed to basic residues; sequence SKKGQKPRGGRGKKPAS. Over residues 343-355 the composition is skewed to acidic residues; that stretch reads ESDDDGDDSEAEE. Residues 360-370 are compositionally biased toward basic residues; that stretch reads PKGRGTKPAIK.

This sequence belongs to the FPG family. Monomer. In terms of tissue distribution, expressed in leaves (at protein levels).

The protein resides in the nucleus. It catalyses the reaction Hydrolysis of DNA containing ring-opened 7-methylguanine residues, releasing 2,6-diamino-4-hydroxy-5-(N-methyl)formamidopyrimidine.. The enzyme catalyses 2'-deoxyribonucleotide-(2'-deoxyribose 5'-phosphate)-2'-deoxyribonucleotide-DNA = a 3'-end 2'-deoxyribonucleotide-(2,3-dehydro-2,3-deoxyribose 5'-phosphate)-DNA + a 5'-end 5'-phospho-2'-deoxyribonucleoside-DNA + H(+). Its function is as follows. Involved in base excision repair of DNA damaged by oxidation or by mutagenic agents. Acts as a DNA glycosylase that recognizes and removes damaged bases. Can process efficiently 4,6-diamino-5-formamidopyrimidine (FapyA), 2,6-diamino-4- hydroxy-5-formamidopyrimidine (FapyG) and the further oxidation products of 8-oxoguanine (8-oxoG), such as guanidinohydantoin and spiroiminodihydantoin. Has marginal activity towards 8-oxoG. Has AP (apurinic/apyrimidinic) lyase activity. Cleaves the DNA backbone by beta-delta elimination to generate a single-strand break at the site of the removed base with both 3'- and 5'-phosphates. This is Formamidopyrimidine-DNA glycosylase (FPG1) from Arabidopsis thaliana (Mouse-ear cress).